The primary structure comprises 681 residues: Transketolase 2 (681 aa).

Residue histidine 30 coordinates substrate. Thiamine diphosphate is bound by residues histidine 69 and 116–118; that span reads GPL. Aspartate 157 lines the Mg(2+) pocket. The thiamine diphosphate site is built by glycine 158 and asparagine 187. Residues asparagine 187 and isoleucine 189 each coordinate Mg(2+). Substrate is bound by residues histidine 263, arginine 359, and serine 386. Histidine 263 is a binding site for thiamine diphosphate. Residues glutamate 418 and phenylalanine 445 each coordinate thiamine diphosphate. The active-site Proton donor is the glutamate 418. 3 residues coordinate substrate: histidine 469, aspartate 477, and arginine 528.

This sequence belongs to the transketolase family. As to quaternary structure, homodimer. The cofactor is Mg(2+). Requires Ca(2+) as cofactor. Mn(2+) is required as a cofactor. It depends on Co(2+) as a cofactor. Thiamine diphosphate serves as cofactor.

It carries out the reaction D-sedoheptulose 7-phosphate + D-glyceraldehyde 3-phosphate = aldehydo-D-ribose 5-phosphate + D-xylulose 5-phosphate. In terms of biological role, catalyzes the transfer of a two-carbon ketol group from a ketose donor to an aldose acceptor, via a covalent intermediate with the cofactor thiamine pyrophosphate. The chain is Transketolase 2 (TKL2) from Saccharomyces cerevisiae (strain ATCC 204508 / S288c) (Baker's yeast).